The following is a 543-amino-acid chain: Probable protein kinase UbiB (543 aa).

The 378-residue stretch at 123 to 500 (DFDQQPLASA…HRRHAQARFL (378 aa)) folds into the Protein kinase domain. Residues 129-137 (LASASVAQV) and K152 each bind ATP. The Proton acceptor role is filled by D286. 2 consecutive transmembrane segments (helical) span residues 499–519 (FLLG…PTHE) and 521–541 (LASA…WKIS).

Belongs to the ABC1 family. UbiB subfamily.

The protein resides in the cell inner membrane. It functions in the pathway cofactor biosynthesis; ubiquinone biosynthesis [regulation]. Its function is as follows. Is probably a protein kinase regulator of UbiI activity which is involved in aerobic coenzyme Q (ubiquinone) biosynthesis. The polypeptide is Probable protein kinase UbiB (Tolumonas auensis (strain DSM 9187 / NBRC 110442 / TA 4)).